A 795-amino-acid chain; its full sequence is Cyclin-dependent kinase 11B (795 aa).

The span at 17–60 (LQEKKRRKEQEEKAEIKRLKNSDDRDSKRDSLEEGELRDHRMEI) shows a compositional bias: basic and acidic residues. Residues 17 to 412 (LQEKKRRKEQ…EGDYVPDSPA (396 aa)) are disordered. 2 positions are modified to phosphoserine: S47 and S72. Basic residues predominate over residues 95 to 113 (EKAHHRKDEKRKEKRRHRS). 4 stretches are compositionally biased toward basic and acidic residues: residues 114–131 (HSAE…EREH), 138–227 (REEQ…DKVK), 238–253 (PPRE…KPGE), and 264–276 (QLKE…RDLL). Position 115 is a phosphoserine (S115). S283 carries the post-translational modification Phosphoserine. A compositionally biased stretch (low complexity) spans 291–302 (SAESSSAESGSG). Acidic residues-rich tracts occupy residues 303–364 (SEEE…EERE) and 383–392 (ESEEAEEEVG). A Protein kinase domain is found at 438 to 723 (FQCLNRIEEG…AEDGLKHEYF (286 aa)). Residues 444–452 (IEEGTYGVV) and K467 contribute to the ATP site. At S482 the chain carries Phosphoserine; by CDK7. A Phosphothreonine; by CDK7 modification is found at T488. D562 (proton acceptor) is an active-site residue. S589 is modified (phosphoserine). The residue at position 594 (Y594) is a Phosphotyrosine. T595 bears the Phosphothreonine mark. K641 participates in a covalent cross-link: Glycyl lysine isopeptide (Lys-Gly) (interchain with G-Cter in SUMO2). Positions 733-795 (SMFPTWPAKS…AAGPGFSLKF (63 aa)) are disordered. The residue at position 751 (T751) is a Phosphothreonine. S752 is subject to Phosphoserine.

This sequence belongs to the protein kinase superfamily. CMGC Ser/Thr protein kinase family. CDC2/CDKX subfamily. Cleaved isoform SV9 (p110C) binds to the serine/threonine kinase PAK1 and RANBP9. p110C interacts with RNPS1. Isoform 7, but not isoform SV9, nor its cleavage product p110C, interacts with CCND3. Interacts with CCNL1 and CCNL2. Forms complexes with pre-mRNA-splicing factors, including at least SRSF1, SRSF2 and SRSF7/SLU7. Interacts with isoform 5 of MYO18A. As to quaternary structure, (Microbial infection) Interacts with human herpes virus 1 (HHV-1) transcriptional regulator ICP22. It depends on Mg(2+) as a cofactor. During FAS- or TNF-induced apoptosis, isoform SV9 is cleaved by caspases to produce p110C, a fragment that contains the C-terminal kinase domain. In terms of processing, phosphorylation at Ser-115 creates a binding site for 14-3-3 proteins. p110C can be autophosphorylated. Expressed ubiquitously. Some evidence of isoform-specific tissue distribution.

It localises to the cytoplasm. It is found in the nucleus. The enzyme catalyses L-seryl-[protein] + ATP = O-phospho-L-seryl-[protein] + ADP + H(+). It carries out the reaction L-threonyl-[protein] + ATP = O-phospho-L-threonyl-[protein] + ADP + H(+). With respect to regulation, phosphorylation at Thr-448 or Tyr-449 inactivates the enzyme, while phosphorylation at Thr-595 activates it. In terms of biological role, plays multiple roles in cell cycle progression, cytokinesis and apoptosis. Involved in pre-mRNA splicing in a kinase activity-dependent manner. Isoform 7 may act as a negative regulator of normal cell cycle progression. This is Cyclin-dependent kinase 11B (CDK11B) from Homo sapiens (Human).